Here is a 660-residue protein sequence, read N- to C-terminus: DNA mismatch repair protein MutL (660 aa).

Polar residues predominate over residues 341 to 355; the sequence is SFQSDGAPPTQQLSS. Disordered regions lie at residues 341–362 and 378–398; these read SFQS…EKAE and ALSP…RVER. Over residues 385–398 the composition is skewed to basic and acidic residues; that stretch reads ELPKSPERSERVER.

Belongs to the DNA mismatch repair MutL/HexB family.

Its function is as follows. This protein is involved in the repair of mismatches in DNA. It is required for dam-dependent methyl-directed DNA mismatch repair. May act as a 'molecular matchmaker', a protein that promotes the formation of a stable complex between two or more DNA-binding proteins in an ATP-dependent manner without itself being part of a final effector complex. This Heliobacterium modesticaldum (strain ATCC 51547 / Ice1) protein is DNA mismatch repair protein MutL.